A 150-amino-acid polypeptide reads, in one-letter code: Large ribosomal subunit protein uL13 (150 aa).

The tract at residues 127–150 (KGTEHPHSAQKPQPLQLNPSATAK) is disordered. Residues 136–150 (QKPQPLQLNPSATAK) show a composition bias toward polar residues.

It belongs to the universal ribosomal protein uL13 family. As to quaternary structure, part of the 50S ribosomal subunit.

This protein is one of the early assembly proteins of the 50S ribosomal subunit, although it is not seen to bind rRNA by itself. It is important during the early stages of 50S assembly. The sequence is that of Large ribosomal subunit protein uL13 from Synechococcus sp. (strain CC9902).